The chain runs to 299 residues: Acetylglutamate kinase (299 aa).

Substrate-binding positions include 68 to 69 (GG), Arg-90, and Asn-195.

This sequence belongs to the acetylglutamate kinase family. ArgB subfamily.

The protein localises to the cytoplasm. It catalyses the reaction N-acetyl-L-glutamate + ATP = N-acetyl-L-glutamyl 5-phosphate + ADP. It participates in amino-acid biosynthesis; L-arginine biosynthesis; N(2)-acetyl-L-ornithine from L-glutamate: step 2/4. Its function is as follows. Catalyzes the ATP-dependent phosphorylation of N-acetyl-L-glutamate. This chain is Acetylglutamate kinase, found in Erythrobacter litoralis (strain HTCC2594).